The sequence spans 373 residues: Spore germination protein KB (373 aa).

The next 10 membrane-spanning stretches (helical) occupy residues 11–31, 37–57, 78–98, 105–125, 143–163, 185–205, 219–239, 269–289, 306–326, and 338–358; these read LFVMIIIFELGSSLLITPGSM, WIAVLLGCAIGLFLFYLYQGI, LSWLFSFLYILYFAYIAARVL, LLTFAYHDTPIIIVNALLMVV, LLFGAMYLLGAIGLVLIIVSG, VFTQTMYVPFGEVVLFVMIFP, IAMAISGLIVALTVAINISVL, VFFMLALIIGGFFKVSLYLYA, LAYPMGLGILILSITIATNFS, and LYIHLPFQLLFPLFLFIVAVW.

Belongs to the amino acid-polyamine-organocation (APC) superfamily. Spore germination protein (SGP) (TC 2.A.3.9) family.

Its subcellular location is the cell membrane. Involved in the germination response to the combination of glucose, fructose, L-asparagine, and KCl. The polypeptide is Spore germination protein KB (gerKB) (Bacillus subtilis (strain 168)).